Here is a 413-residue protein sequence, read N- to C-terminus: Serine hydroxymethyltransferase (413 aa).

(6S)-5,6,7,8-tetrahydrofolate-binding positions include Leu120 and 124-126 (GHL). An N6-(pyridoxal phosphate)lysine modification is found at Lys228.

This sequence belongs to the SHMT family. As to quaternary structure, homodimer. Pyridoxal 5'-phosphate serves as cofactor.

The protein resides in the cytoplasm. The catalysed reaction is (6R)-5,10-methylene-5,6,7,8-tetrahydrofolate + glycine + H2O = (6S)-5,6,7,8-tetrahydrofolate + L-serine. Its pathway is one-carbon metabolism; tetrahydrofolate interconversion. It participates in amino-acid biosynthesis; glycine biosynthesis; glycine from L-serine: step 1/1. Catalyzes the reversible interconversion of serine and glycine with tetrahydrofolate (THF) serving as the one-carbon carrier. This reaction serves as the major source of one-carbon groups required for the biosynthesis of purines, thymidylate, methionine, and other important biomolecules. Also exhibits THF-independent aldolase activity toward beta-hydroxyamino acids, producing glycine and aldehydes, via a retro-aldol mechanism. The sequence is that of Serine hydroxymethyltransferase from Agathobacter rectalis (strain ATCC 33656 / DSM 3377 / JCM 17463 / KCTC 5835 / VPI 0990) (Eubacterium rectale).